A 132-amino-acid chain; its full sequence is Snaclec bothroinsularin subunit alpha (132 aa).

3 disulfide bridges follow: Cys-2–Cys-13, Cys-30–Cys-127, and Cys-102–Cys-119. The C-type lectin domain maps to 9–128 (YGQYCYKFFQ…CGQQNPFVCK (120 aa)).

The protein belongs to the snaclec family. As to quaternary structure, heterodimer of subunits alpha and beta; disulfide-linked. In terms of tissue distribution, expressed by the venom gland.

Its subcellular location is the secreted. Functionally, thrombin and prothrombin (F2) inhibitor. The IC(50) of thrombin-induced platelet aggregation and fibrinocoagulation is 62 and 35 nM, respectively. Its inhibitory activity is at least 10-fold lower than that observed for other thrombin inhibitors. This Bothrops insularis (Golden lancehead) protein is Snaclec bothroinsularin subunit alpha.